The primary structure comprises 391 residues: Succinate--CoA ligase [ADP-forming] subunit beta (391 aa).

Positions 9–245 (KQIFAEYGVP…LSEEDPDEVE (237 aa)) constitute an ATP-grasp domain. ATP is bound by residues Lys46, 53-55 (GRG), Glu99, Ala102, and Glu107. Residues Asn200 and Asp214 each coordinate Mg(2+). Substrate-binding positions include Asn265 and 322-324 (GIV).

Belongs to the succinate/malate CoA ligase beta subunit family. In terms of assembly, heterotetramer of two alpha and two beta subunits. Mg(2+) is required as a cofactor.

The enzyme catalyses succinate + ATP + CoA = succinyl-CoA + ADP + phosphate. The catalysed reaction is GTP + succinate + CoA = succinyl-CoA + GDP + phosphate. The protein operates within carbohydrate metabolism; tricarboxylic acid cycle; succinate from succinyl-CoA (ligase route): step 1/1. In terms of biological role, succinyl-CoA synthetase functions in the citric acid cycle (TCA), coupling the hydrolysis of succinyl-CoA to the synthesis of either ATP or GTP and thus represents the only step of substrate-level phosphorylation in the TCA. The beta subunit provides nucleotide specificity of the enzyme and binds the substrate succinate, while the binding sites for coenzyme A and phosphate are found in the alpha subunit. This chain is Succinate--CoA ligase [ADP-forming] subunit beta, found in Sulfurovum sp. (strain NBC37-1).